A 483-amino-acid chain; its full sequence is Low-density lipoprotein receptor-related protein 11 (483 aa).

Positions 1-32 (MATRGGGPGPGFRHRALRGLLLLCLWLPGSRP) are cleaved as a signal peptide. The Extracellular segment spans residues 33 to 433 (GEPAAPSSGV…GGEHPAPEAG (401 aa)). The 88-residue stretch at 85–172 (AVPDTIIRTQ…FAPLRGYRTY (88 aa)) folds into the MANSC domain. Asparagine 152 and asparagine 275 each carry an N-linked (GlcNAc...) asparagine glycan. The PKD domain occupies 193-287 (PVSKAGKDVV…VTVLPRPYST (95 aa)). Residues 293 to 329 (ACSRYHFFCDSGCCIDIALACDGVRQCPDGSDEDFCQ) enclose the LDL-receptor class A domain. 3 cysteine pairs are disulfide-bonded: cysteine 294-cysteine 306, cysteine 301-cysteine 319, and cysteine 313-cysteine 328. The tract at residues 346–428 (AQPGAMGLNE…KSGQAGGEHP (83 aa)) is disordered. Composition is skewed to polar residues over residues 367–376 (RATTHNQPAT) and 385–407 (HSTQ…SSGK). Asparagine 403 is a glycosylation site (N-linked (GlcNAc...) asparagine). Basic and acidic residues predominate over residues 408–418 (NQEEGNYDLKS). Residues 434-456 (AVLPLALGLAITVLLLLMVTCRL) form a helical membrane-spanning segment. Topologically, residues 457 to 483 (RLVKQKLKKARPITSEESDYLINGMYL) are cytoplasmic. Serine 474 is subject to Phosphoserine.

It belongs to the LDLR family.

The protein localises to the membrane. The protein is Low-density lipoprotein receptor-related protein 11 (Lrp11) of Mus musculus (Mouse).